Here is a 128-residue protein sequence, read N- to C-terminus: Large ribosomal subunit protein bL12 (128 aa).

Belongs to the bacterial ribosomal protein bL12 family. In terms of assembly, homodimer. Part of the ribosomal stalk of the 50S ribosomal subunit. Forms a multimeric L10(L12)X complex, where L10 forms an elongated spine to which 2 to 4 L12 dimers bind in a sequential fashion. Binds GTP-bound translation factors.

In terms of biological role, forms part of the ribosomal stalk which helps the ribosome interact with GTP-bound translation factors. Is thus essential for accurate translation. In Brachyspira hyodysenteriae (strain ATCC 49526 / WA1), this protein is Large ribosomal subunit protein bL12.